A 449-amino-acid chain; its full sequence is FAD-linked oxidoreductase janO (449 aa).

An FAD-binding PCMH-type domain is found at 32–203 (PDAQPLAIIK…TRFHLNTRPL (172 aa)).

The protein belongs to the oxygen-dependent FAD-linked oxidoreductase family. FAD is required as a cofactor.

It functions in the pathway secondary metabolite biosynthesis. FAD-linked oxidoreductase; part of the gene cluster that mediates the biosynthesis of the indole diterpenes janthitremanes such as shearinine K or shearinine A. The geranylgeranyl diphosphate (GGPP) synthase janG catalyzes the first step in janthitremane biosynthesis via conversion of farnesyl pyrophosphate and isopentyl pyrophosphate into geranylgeranyl pyrophosphate (GGPP). Condensation of indole-3-glycerol phosphate with GGPP by the prenyl transferase janC then forms 3-geranylgeranylindole (3-GGI). Epoxidation by the FAD-dependent monooxygenase janM leads to a epoxidized-GGI that is substrate of the terpene cyclase janB for cyclization to yield paspaline. Paspaline is subsequently converted to 13-desoxypaspaline by the cytochrome P450 monooxygenase janP, via beta-PC-M6 in a series of alpha-face oxidations. The cytochrome P450 monooxygenase janQ is proposed to carry out sequential beta-face oxidation steps at C-7 and C-13 of 13-desoxypaspaline to form paspalicine and paspalinine respectively. The indole diterpene prenyltransferase janD may then convert paspalinine into shearinine K which is substrate of janO and/or additional enzymes for oxidation and cyclization to generate shearinine A. The protein is FAD-linked oxidoreductase janO of Penicillium janthinellum (Penicillium vitale).